The chain runs to 397 residues: 16-O-methyltransferase bsc6 (397 aa).

Residue aspartate 262 participates in S-adenosyl-L-methionine binding. The active-site Proton acceptor is the histidine 302.

Belongs to the class I-like SAM-binding methyltransferase superfamily. Cation-independent O-methyltransferase family. The cofactor is S-adenosyl-L-methionine.

Its pathway is mycotoxin biosynthesis. Functionally, 16-O-methyltransferase; part of the gene cluster that mediates the biosynthesis of the diterpene glucoside brassicicene C. In the first step of the brassicicene C biosynthesis, the bifunctional diterpene synthase bsc8 that possesses both prenyl transferase and terpene cyclase activity, converts isopentenyl diphosphate and dimethylallyl diphosphate into geranylgeranyl diphosphate (GGDP) that is further converted into fusicocca-2,10(14)-diene, the first precursor for brassicicene C. Fusicocca-2,10(14)-diene is then substrate of cytochrome P450 monooxygenase bsc1 for hydroxylation at the C-8 position. Oxidation at C-16 position to aldehyde is then catalyzed by the cytochrome P450 monooyxygenase bsc7, yielding fusicocca-2,10(14)-diene-8-beta,16-diol. Follows the isomerization of the double bond and reduction of aldehyde to alcohol catalyzed by the short-chain dehydrogenase/reductase bsc3 to yield the diol compound fusicocca-1,10(14)-diene-8 beta,16-diol. The next step is the oxidation at the C-3 position of fusicocca-2,10(14)-diene-8-beta,16-diol catalyzed by the alpha-ketoglutarate dependent dioxygenase bsc9, to produce a triol compound. Methylation of the hydroxy group at position 16 is performed by the methyltransferase bsc6. 16-O-methylation is followed by oxidation at the C-13 position to ketone and an alkyl shift of the methyl group leads to brassicicene C. Although the probable acetyltransferase bsc4 is included in the gene cluster, no acetylation reactions are necessary for brassicicene C biosynthesis. However, the fact that brassicicene E, which is a structurally related compound having an acetoxy group at position 12, was previously isolated from another strain of A.brassicicola suggests that the ATCC 96836 strain might also produce a small amount of brassicicene E. The protein is 16-O-methyltransferase bsc6 of Alternaria brassicicola (Dark leaf spot agent).